Consider the following 50-residue polypeptide: uncharacterized protein (50 aa).

This is an uncharacterized protein from Dichelobacter nodosus (Bacteroides nodosus).